The sequence spans 1035 residues: Unconventional myosin IC (1035 aa).

The Myosin motor domain occupies 21–703; the sequence is GVQDFVLLEN…TLFDTEDAYQ (683 aa). Position 114-121 (114-121) interacts with ATP; it reads GESGSGKT. A Phosphoserine modification is found at Ser-304. Thr-310 carries the post-translational modification Phosphothreonine. Residues 578–600 are actin-binding; it reads LNNLMDILMCKEPSYIRCIKPND. IQ domains lie at 696 to 728, 729 to 751, and 752 to 779; these read FDTEDAYQEKKHEIAAIIQAHWKGLMQRRKYLK, LRAQVIIMQSYCRRKLAQQAAKK, and RREAADKIRAFIKGFITRNDAPNGFNEE. The region spanning 857-1035 is the TH1 domain; that stretch reads KNNYASSVST…KGHLVIIGTQ (179 aa).

Belongs to the TRAFAC class myosin-kinesin ATPase superfamily. Myosin family. In terms of assembly, binds F-actin. In terms of tissue distribution, in the embryo, expressed in gastric caeca, midgut cells of the proventriculus, and in the mid and hindgut. In the larval and adult gut brush border, expressed in the microvilli. Also expressed at high levels in follicle cells during oogenesis.

Its subcellular location is the cytoplasm. The protein localises to the cell cortex. The protein resides in the cell membrane. In terms of biological role, unconventional myosin that functions as actin-based motor protein with ATPase activity. Binds to membranes enriched in phosphatidylinositol 4-5-bisphosphate, and can glide along actin filaments when anchored to a lipid bilayer. Functions as antagonist for Myo31DF, an unconventional myosin with an essential role in the establishment of body left-right asymmetry. The polypeptide is Unconventional myosin IC (Myo61F) (Drosophila melanogaster (Fruit fly)).